A 236-amino-acid polypeptide reads, in one-letter code: 2-C-methyl-D-erythritol 4-phosphate cytidylyltransferase (236 aa).

This sequence belongs to the IspD/TarI cytidylyltransferase family. IspD subfamily.

It catalyses the reaction 2-C-methyl-D-erythritol 4-phosphate + CTP + H(+) = 4-CDP-2-C-methyl-D-erythritol + diphosphate. It functions in the pathway isoprenoid biosynthesis; isopentenyl diphosphate biosynthesis via DXP pathway; isopentenyl diphosphate from 1-deoxy-D-xylulose 5-phosphate: step 2/6. In terms of biological role, catalyzes the formation of 4-diphosphocytidyl-2-C-methyl-D-erythritol from CTP and 2-C-methyl-D-erythritol 4-phosphate (MEP). This Burkholderia vietnamiensis (strain G4 / LMG 22486) (Burkholderia cepacia (strain R1808)) protein is 2-C-methyl-D-erythritol 4-phosphate cytidylyltransferase.